A 957-amino-acid chain; its full sequence is Glycine dehydrogenase (decarboxylating) (957 aa).

Lysine 702 is modified (N6-(pyridoxal phosphate)lysine).

This sequence belongs to the GcvP family. The glycine cleavage system is composed of four proteins: P, T, L and H. Requires pyridoxal 5'-phosphate as cofactor.

It catalyses the reaction N(6)-[(R)-lipoyl]-L-lysyl-[glycine-cleavage complex H protein] + glycine + H(+) = N(6)-[(R)-S(8)-aminomethyldihydrolipoyl]-L-lysyl-[glycine-cleavage complex H protein] + CO2. Functionally, the glycine cleavage system catalyzes the degradation of glycine. The P protein binds the alpha-amino group of glycine through its pyridoxal phosphate cofactor; CO(2) is released and the remaining methylamine moiety is then transferred to the lipoamide cofactor of the H protein. This chain is Glycine dehydrogenase (decarboxylating), found in Bradyrhizobium sp. (strain BTAi1 / ATCC BAA-1182).